Reading from the N-terminus, the 264-residue chain is MMDCTWTLPGMRATWQPAPFLPWDQTPWRVSFSWSPVLLAWGGVWSGEAHPCAHVLRPPASPCPPRPRRGCGDSGSSGMAQRAQAGSNQSRGKCGRDGRCPPRSSPGAPEAAERVESAETRGPGKSWILSPSSMSEPRRGKARRSPGRRRHPHSSFPQASSPSSPSRRETIPQVQSSGVPGAMSPEQTLFSRSPRGLSHLGQSLCRTVKESEAQRGKTMPPGSHSPSGAGQGRTARKGPAREEIPSSDSSAKPSVYPHPHLTAT.

Residues 57 to 264 are disordered; it reads RPPASPCPPR…VYPHPHLTAT (208 aa). Basic residues predominate over residues 140–153; that stretch reads GKARRSPGRRRHPH. A compositionally biased stretch (low complexity) spans 154–165; sequence SSFPQASSPSSP.

This is an uncharacterized protein from Homo sapiens (Human).